We begin with the raw amino-acid sequence, 158 residues long: Endoribonuclease YbeY (158 aa).

Residues His-114, His-118, and His-124 each coordinate Zn(2+).

This sequence belongs to the endoribonuclease YbeY family. It depends on Zn(2+) as a cofactor.

It localises to the cytoplasm. Its function is as follows. Single strand-specific metallo-endoribonuclease involved in late-stage 70S ribosome quality control and in maturation of the 3' terminus of the 16S rRNA. This is Endoribonuclease YbeY from Legionella pneumophila (strain Paris).